A 337-amino-acid polypeptide reads, in one-letter code: Glycerol-3-phosphate dehydrogenase [NAD(P)+] (337 aa).

NADPH contacts are provided by W11, R30, and K102. Sn-glycerol 3-phosphate-binding residues include K102, G138, and S140. A142 contributes to the NADPH binding site. 5 residues coordinate sn-glycerol 3-phosphate: K193, D246, S256, R257, and N258. Catalysis depends on K193, which acts as the Proton acceptor. R257 is an NADPH binding site. Residues V281 and E283 each contribute to the NADPH site.

The protein belongs to the NAD-dependent glycerol-3-phosphate dehydrogenase family.

It is found in the cytoplasm. It carries out the reaction sn-glycerol 3-phosphate + NAD(+) = dihydroxyacetone phosphate + NADH + H(+). The enzyme catalyses sn-glycerol 3-phosphate + NADP(+) = dihydroxyacetone phosphate + NADPH + H(+). It participates in membrane lipid metabolism; glycerophospholipid metabolism. In terms of biological role, catalyzes the reduction of the glycolytic intermediate dihydroxyacetone phosphate (DHAP) to sn-glycerol 3-phosphate (G3P), the key precursor for phospholipid synthesis. The sequence is that of Glycerol-3-phosphate dehydrogenase [NAD(P)+] from Variovorax paradoxus (strain S110).